Consider the following 285-residue polypeptide: Putative hydrolase DDAH2 (285 aa).

His171 (proton donor) is an active-site residue. The active-site Nucleophile is Cys276.

This sequence belongs to the DDAH family. In terms of processing, phosphorylated by TBK1. Phosphorylation inhibits the translocation into the mitochondrion upon Sendai viral infection. As to expression, detected in heart, placenta, lung, liver, skeletal muscle, kidney and pancreas, and at very low levels in brain.

The protein localises to the cytoplasm. Its subcellular location is the mitochondrion. Functionally, putative hydrolase with unknown substrate. Does not hydrolyze N(G),N(G)-dimethyl-L-arginine (ADMA) which acts as an inhibitor of NOS. In endothelial cells, induces expression of vascular endothelial growth factor (VEGF) via phosphorylation of the transcription factor SP1 by PKA in a process that is independent of NO and NO synthase. Similarly, enhances pancreatic insulin secretion through SP1-mediated transcriptional up-regulation of secretagogin/SCGN, an insulin vesicle docking protein. Upon viral infection, relocates to mitochondria where it promotes mitochondrial fission through activation of DNM1L leading to the inhibition of innate response activation mediated by MAVS. In Homo sapiens (Human), this protein is Putative hydrolase DDAH2.